Reading from the N-terminus, the 261-residue chain is 5'-nucleotidase SurE (261 aa).

A divalent metal cation is bound by residues Asp-8, Asp-9, Ser-43, and Asn-96.

The protein belongs to the SurE nucleotidase family. Requires a divalent metal cation as cofactor.

It is found in the cytoplasm. The catalysed reaction is a ribonucleoside 5'-phosphate + H2O = a ribonucleoside + phosphate. Its function is as follows. Nucleotidase that shows phosphatase activity on nucleoside 5'-monophosphates. This Cereibacter sphaeroides (strain KD131 / KCTC 12085) (Rhodobacter sphaeroides) protein is 5'-nucleotidase SurE.